The sequence spans 157 residues: 2-C-methyl-D-erythritol 2,4-cyclodiphosphate synthase (157 aa).

2 residues coordinate a divalent metal cation: aspartate 8 and histidine 10. Residues 8-10 (DVH) and 34-35 (HS) contribute to the 4-CDP-2-C-methyl-D-erythritol 2-phosphate site. Histidine 42 provides a ligand contact to a divalent metal cation. 4-CDP-2-C-methyl-D-erythritol 2-phosphate is bound by residues 56 to 58 (DIG), 61 to 65 (FPDTD), 100 to 106 (AQAPKMA), 132 to 135 (TTSE), phenylalanine 139, and arginine 142.

Belongs to the IspF family. In terms of assembly, homotrimer. The cofactor is a divalent metal cation.

It catalyses the reaction 4-CDP-2-C-methyl-D-erythritol 2-phosphate = 2-C-methyl-D-erythritol 2,4-cyclic diphosphate + CMP. Its pathway is isoprenoid biosynthesis; isopentenyl diphosphate biosynthesis via DXP pathway; isopentenyl diphosphate from 1-deoxy-D-xylulose 5-phosphate: step 4/6. In terms of biological role, involved in the biosynthesis of isopentenyl diphosphate (IPP) and dimethylallyl diphosphate (DMAPP), two major building blocks of isoprenoid compounds. Catalyzes the conversion of 4-diphosphocytidyl-2-C-methyl-D-erythritol 2-phosphate (CDP-ME2P) to 2-C-methyl-D-erythritol 2,4-cyclodiphosphate (ME-CPP) with a corresponding release of cytidine 5-monophosphate (CMP). This Photobacterium profundum (strain SS9) protein is 2-C-methyl-D-erythritol 2,4-cyclodiphosphate synthase.